The sequence spans 62 residues: 6.7 kDa chloroplast outer envelope membrane protein (62 aa).

Residues 1-17 are Chloroplast intermembrane-facing; sequence MESVAKPATTKEGSAKQ. The helical transmembrane segment at 18-40 threads the bilayer; sequence AAIVVGVLALGWFAIQVAFIPLF. Residues 41-62 lie on the Cytoplasmic side of the membrane; it reads NKVRGGGSDKKDDDVNAFTPDT.

Its subcellular location is the plastid. The protein localises to the chloroplast outer membrane. The protein is 6.7 kDa chloroplast outer envelope membrane protein of Spinacia oleracea (Spinach).